Here is a 346-residue protein sequence, read N- to C-terminus: Putative glycosyltransferase HI_0523 (346 aa).

The protein belongs to the glycosyltransferase 9 family.

This is Putative glycosyltransferase HI_0523 from Haemophilus influenzae (strain ATCC 51907 / DSM 11121 / KW20 / Rd).